The chain runs to 733 residues: Submandibular gland protein C (733 aa).

The N-terminal stretch at 1–20 is a signal peptide; the sequence is MKLILLYLAVVLCFVGKARS. The tract at residues 48–91 is disordered; that stretch reads KSSGGSKDYNLSDGGKSNSRKNLSPATGGSATQQSNLDDSHAPN. Asn-57 carries N-linked (GlcNAc...) asparagine glycosylation. Residues 62 to 84 show a composition bias toward polar residues; the sequence is GKSNSRKNLSPATGGSATQQSNL. Asn-141 and Asn-187 each carry an N-linked (GlcNAc...) asparagine glycan. 4 disordered regions span residues 172–204, 249–330, 369–450, and 496–733; these read GQQA…ADKP, LTED…NSSN, and SVTE…PSVA. Polar residues predominate over residues 186–199; it reads ENSSLSTGSATSNK. The segment covering 256 to 270 has biased composition (low complexity); it reads TSTSASVSGDSSTSS. Polar residues predominate over residues 300–318; that stretch reads GSKQNVEDSTLSTGSATSN. Residue Asn-327 is glycosylated (N-linked (GlcNAc...) asparagine). The span at 376–390 shows a compositional bias: low complexity; sequence TSTSASVSGDSSTSS. Positions 420-438 are enriched in polar residues; the sequence is GSKQNVEDSTLSTGSATSN. N-linked (GlcNAc...) asparagine glycans are attached at residues Asn-447, Asn-514, and Asn-528. 2 stretches are compositionally biased toward polar residues: residues 496–516 and 525–535; these read SVTE…NNLS and NPTNGSSSASS. Basic and acidic residues predominate over residues 538–552; that stretch reads KPYEEGMRKLLKFLE. Low complexity-rich tracts occupy residues 563 to 574 and 609 to 619; these read SVSGMSSESSRS and SSNSSTGSATS. N-linked (GlcNAc...) asparagine glycosylation is present at Asn-611. Residues 654–665 are compositionally biased toward gly residues; it reads GFNGPEGVGENN. The segment covering 677-701 has biased composition (low complexity); sequence GSKSDSGSHNLSSGSGSRSNVSTGG. Residues Asn-686 and Asn-696 are each glycosylated (N-linked (GlcNAc...) asparagine). A compositionally biased stretch (polar residues) spans 722–733; it reads TGKTQSGSPSVA.

In terms of processing, N-glycosylated. Detected in terminal tubule cells of the submandibular gland (at protein level). Expressed in submandibular salivary glands of 3-day-old males but not adults. Expression in adult submandibular glands is restricted to females. Isoform 5 is expressed in both 3-day-old and adult sublingual glands.

The protein resides in the secreted. The polypeptide is Submandibular gland protein C (Muc19) (Mus musculus (Mouse)).